The primary structure comprises 373 residues: Dual-specificity RNA methyltransferase RlmN (373 aa).

Glutamate 94 (proton acceptor) is an active-site residue. Residues 100-339 (EDDRATLCVS…VIVRKTRGDD (240 aa)) enclose the Radical SAM core domain. Residues cysteine 107 and cysteine 344 are joined by a disulfide bond. Residues cysteine 114, cysteine 118, and cysteine 121 each contribute to the [4Fe-4S] cluster site. S-adenosyl-L-methionine is bound by residues 168–169 (GE), serine 200, 222–224 (SIH), and asparagine 301. The active-site S-methylcysteine intermediate is the cysteine 344.

It belongs to the radical SAM superfamily. RlmN family. [4Fe-4S] cluster is required as a cofactor.

The protein resides in the cytoplasm. The catalysed reaction is adenosine(2503) in 23S rRNA + 2 reduced [2Fe-2S]-[ferredoxin] + 2 S-adenosyl-L-methionine = 2-methyladenosine(2503) in 23S rRNA + 5'-deoxyadenosine + L-methionine + 2 oxidized [2Fe-2S]-[ferredoxin] + S-adenosyl-L-homocysteine. It catalyses the reaction adenosine(37) in tRNA + 2 reduced [2Fe-2S]-[ferredoxin] + 2 S-adenosyl-L-methionine = 2-methyladenosine(37) in tRNA + 5'-deoxyadenosine + L-methionine + 2 oxidized [2Fe-2S]-[ferredoxin] + S-adenosyl-L-homocysteine. Its function is as follows. Specifically methylates position 2 of adenine 2503 in 23S rRNA and position 2 of adenine 37 in tRNAs. m2A2503 modification seems to play a crucial role in the proofreading step occurring at the peptidyl transferase center and thus would serve to optimize ribosomal fidelity. In Shewanella pealeana (strain ATCC 700345 / ANG-SQ1), this protein is Dual-specificity RNA methyltransferase RlmN.